The primary structure comprises 99 residues: U8-agatoxin-Ao1a (99 aa).

The N-terminal stretch at 1-19 (MKSLLFVTIAVYFVAQAVT) is a signal peptide. A propeptide spanning residues 20–45 (ANLLSNFLGSSLIDDDKGNMHKLYKR) is cleaved from the precursor.

The protein belongs to the neurotoxin 02 (plectoxin) family. In terms of processing, contains 5 disulfide bonds. As to expression, expressed by the venom gland.

It is found in the secreted. This is U8-agatoxin-Ao1a from Agelena orientalis (Funnel-web spider).